The primary structure comprises 316 residues: Bifunctional peptidase and (3S)-lysyl hydroxylase JMJD7 (316 aa).

Cysteine 19 is modified (cysteine sulfenic acid (-SOH)). Residues tyrosine 123 and threonine 172 each coordinate 2-oxoglutarate. Residue tyrosine 123 participates in succinate binding. The region spanning 124–310 (IQKQNSNLSV…YCYYRMLEQM (187 aa)) is the JmjC domain. Fe cation-binding residues include histidine 175 and aspartate 177. The 2-oxoglutarate site is built by asparagine 181, tyrosine 183, and lysine 190. Succinate is bound by residues tyrosine 183 and lysine 190. Histidine 278 contributes to the Fe cation binding site. Tryptophan 292 lines the 2-oxoglutarate pocket.

In terms of assembly, homodimer; disulfide-linked. Fe(2+) serves as cofactor. In terms of tissue distribution, expressed in the pars intercerebralis and fan-shaped body, regions known to be involved in sleep.

Its subcellular location is the nucleus. It localises to the cytoplasm. The catalysed reaction is L-lysyl-[protein] + 2-oxoglutarate + O2 = (3S)-3-hydroxy-L-lysyl-[protein] + succinate + CO2. Bifunctional enzyme that acts both as an endopeptidase and 2-oxoglutarate-dependent monooxygenase. Endopeptidase that cleaves histones N-terminal tails at the carboxyl side of methylated arginine or lysine residues, to generate 'tailless nucleosomes', which may trigger transcription elongation. Hydroxylates the guanylate binding protein 128up. May be involved in regulation of behavior and circadian rhythms. In Drosophila melanogaster (Fruit fly), this protein is Bifunctional peptidase and (3S)-lysyl hydroxylase JMJD7.